A 322-amino-acid chain; its full sequence is Peroxidase 66 (322 aa).

The signal sequence occupies residues 1–24 (MAFSKGLIFAMIFAVLAIVKPSEA). 2 disulfide bridges follow: Cys-35/Cys-114 and Cys-68/Cys-73. His-66 functions as the Proton acceptor in the catalytic mechanism. Positions 67, 72, 74, and 76 each coordinate Ca(2+). Residue Asn-155 is glycosylated (N-linked (GlcNAc...) asparagine). Pro-161 serves as a coordination point for substrate. Asn-166 carries N-linked (GlcNAc...) asparagine glycosylation. Residue His-191 participates in heme b binding. Thr-192 contacts Ca(2+). A disulfide bond links Cys-198 and Cys-230. An N-linked (GlcNAc...) asparagine glycan is attached at Asn-207. Ca(2+) contacts are provided by Asp-245, Thr-247, and Asp-252.

Belongs to the peroxidase family. Classical plant (class III) peroxidase subfamily. It depends on heme b as a cofactor. Ca(2+) is required as a cofactor.

It is found in the secreted. The enzyme catalyses 2 a phenolic donor + H2O2 = 2 a phenolic radical donor + 2 H2O. Removal of H(2)O(2), oxidation of toxic reductants, biosynthesis and degradation of lignin, suberization, auxin catabolism, response to environmental stresses such as wounding, pathogen attack and oxidative stress. These functions might be dependent on each isozyme/isoform in each plant tissue. In Arabidopsis thaliana (Mouse-ear cress), this protein is Peroxidase 66 (PER66).